We begin with the raw amino-acid sequence, 90 residues long: Cell division topological specificity factor (90 aa).

Residues 1-21 (MAGFWSKLFSSEEKPSSAQTA) are disordered. The span at 10 to 21 (SSEEKPSSAQTA) shows a compositional bias: basic and acidic residues.

This sequence belongs to the MinE family.

Its function is as follows. Prevents the cell division inhibition by proteins MinC and MinD at internal division sites while permitting inhibition at polar sites. This ensures cell division at the proper site by restricting the formation of a division septum at the midpoint of the long axis of the cell. In Acinetobacter baumannii (strain AB307-0294), this protein is Cell division topological specificity factor.